The sequence spans 1010 residues: Glycine--tRNA ligase (1010 aa).

Positions 1 to 312 (MSEHPLTLQS…TSESVVPMIS (312 aa)) are glycine--tRNA ligase alpha subunit. Residues 313 to 1010 (STEDLLLEIG…SLCHWESVAV (698 aa)) form a glycine--tRNA ligase beta subunit region.

This sequence belongs to the class-II aminoacyl-tRNA synthetase family.

The protein resides in the cytoplasm. It carries out the reaction tRNA(Gly) + glycine + ATP = glycyl-tRNA(Gly) + AMP + diphosphate. The sequence is that of Glycine--tRNA ligase (glyQS) from Chlamydia pneumoniae (Chlamydophila pneumoniae).